A 436-amino-acid chain; its full sequence is tRNA pseudouridine synthase Pus10 (436 aa).

The active-site Nucleophile is D254. 2 residues coordinate substrate: Y322 and Y394.

This sequence belongs to the pseudouridine synthase Pus10 family.

It carries out the reaction uridine(54) in tRNA = pseudouridine(54) in tRNA. It catalyses the reaction uridine(55) in tRNA = pseudouridine(55) in tRNA. Its function is as follows. Responsible for synthesis of pseudouridine from uracil-54 and uracil-55 in the psi GC loop of transfer RNAs. This chain is tRNA pseudouridine synthase Pus10, found in Methanopyrus kandleri (strain AV19 / DSM 6324 / JCM 9639 / NBRC 100938).